Here is a 351-residue protein sequence, read N- to C-terminus: Anthranilate phosphoribosyltransferase (351 aa).

5-phospho-alpha-D-ribose 1-diphosphate-binding positions include Gly-84, Gly-87 to Asp-88, Asn-95 to Ser-98, Lys-113 to Ser-121, and Ala-125. Gly-84 lines the anthranilate pocket. Ser-97 is a Mg(2+) binding site. Asn-116 contacts anthranilate. Arg-171 contacts anthranilate. Residues Asp-229 and Lys-230 each coordinate Mg(2+).

The protein belongs to the anthranilate phosphoribosyltransferase family. Homodimer. It depends on Mg(2+) as a cofactor.

The enzyme catalyses N-(5-phospho-beta-D-ribosyl)anthranilate + diphosphate = 5-phospho-alpha-D-ribose 1-diphosphate + anthranilate. It participates in amino-acid biosynthesis; L-tryptophan biosynthesis; L-tryptophan from chorismate: step 2/5. Functionally, catalyzes the transfer of the phosphoribosyl group of 5-phosphorylribose-1-pyrophosphate (PRPP) to anthranilate to yield N-(5'-phosphoribosyl)-anthranilate (PRA). This Clavibacter sepedonicus (Clavibacter michiganensis subsp. sepedonicus) protein is Anthranilate phosphoribosyltransferase.